Here is a 428-residue protein sequence, read N- to C-terminus: Glutamyl-tRNA reductase (428 aa).

Residues Thr55–Arg58, Ser114, Glu119–Gln121, and Gln125 each bind substrate. Catalysis depends on Cys56, which acts as the Nucleophile. Gly194 to Ile199 is a binding site for NADP(+).

Belongs to the glutamyl-tRNA reductase family. Homodimer.

It catalyses the reaction (S)-4-amino-5-oxopentanoate + tRNA(Glu) + NADP(+) = L-glutamyl-tRNA(Glu) + NADPH + H(+). Its pathway is porphyrin-containing compound metabolism; protoporphyrin-IX biosynthesis; 5-aminolevulinate from L-glutamyl-tRNA(Glu): step 1/2. Catalyzes the NADPH-dependent reduction of glutamyl-tRNA(Glu) to glutamate 1-semialdehyde (GSA). This chain is Glutamyl-tRNA reductase, found in Paraburkholderia phytofirmans (strain DSM 17436 / LMG 22146 / PsJN) (Burkholderia phytofirmans).